The following is an 867-amino-acid chain: DNA mismatch repair protein MutS (867 aa).

Residue 609–616 coordinates ATP; it reads GPNMSGKS.

Belongs to the DNA mismatch repair MutS family.

Its function is as follows. This protein is involved in the repair of mismatches in DNA. It is possible that it carries out the mismatch recognition step. This protein has a weak ATPase activity. The protein is DNA mismatch repair protein MutS of Latilactobacillus sakei subsp. sakei (strain 23K) (Lactobacillus sakei subsp. sakei).